We begin with the raw amino-acid sequence, 1755 residues long: Transposon Ty1-OR Gag-Pol polyprotein (1755 aa).

Composition is skewed to polar residues over residues 1–10 (MESQQLSNYP), 48–60 (TKANSQQTTTPAS), and 127–152 (QSQFPQYPSSVGTPLSTPSPESGNTF). Disordered regions lie at residues 1–93 (MESQ…MMTQ), 126–173 (PQSQ…RPPP), and 352–421 (GSRN…SKST). Residues 153-165 (TDSSSADSDMTST) are compositionally biased toward low complexity. The segment at 299 to 401 (NNGIHINNKV…NSKSKTARAH (103 aa)) is RNA-binding. Low complexity predominate over residues 402–418 (NVSTSNNSPSTDNDSIS). The residue at position 416 (Ser416) is a Phosphoserine. Residue Asp461 is the For protease activity; shared with dimeric partner of the active site. The segment at 583–640 (NVHTSESTRKYPYPFIHRMLAHANAQTIRYSLKNNTITYFNESDVDWSSAIDYQCPDC) is integrase-type zinc finger-like. The Integrase catalytic domain maps to 660–835 (NSYEPFQYLH…AGLDISTLLP (176 aa)). Residues Asp671 and Asp736 each contribute to the Mg(2+) site. Disordered stretches follow at residues 956-1087 (SKAV…ETEK), 1092-1111 (RSPSIDASPPENNSSHNIVP), and 1130-1187 (DLPL…DNET). Residues 960–969 (SPTDSTPPST) are compositionally biased toward low complexity. Residues 1005–1015 (STPQISNIEST) are compositionally biased toward polar residues. A compositionally biased stretch (basic and acidic residues) spans 1038-1053 (ESSHASKSKDFRHSDS). Composition is skewed to polar residues over residues 1054-1082 (YSENETNHTNVPISSTGGTNNKTVPQISD) and 1101-1111 (PENNSSHNIVP). A Bipartite nuclear localization signal motif is present at residues 1178 to 1212 (KKRSLEDNETEIKVSRDTWNTKNMRSLEPPRSKKR). One can recognise a Reverse transcriptase Ty1/copia-type domain in the interval 1338–1476 (NNYYITQLDI…DILGLEIKYQ (139 aa)). Asp1346, Asp1427, Asp1428, Asp1610, Glu1652, and Asp1685 together coordinate Mg(2+). Residues 1610-1752 (DASYGNQPYY…IKTFKLLTNK (143 aa)) form the RNase H Ty1/copia-type domain.

In terms of assembly, the capsid protein forms a homotrimer, from which the VLPs are assembled. The protease is a homodimer, whose active site consists of two apposed aspartic acid residues. Initially, virus-like particles (VLPs) are composed of the structural unprocessed proteins Gag and Gag-Pol, and also contain the host initiator methionine tRNA (tRNA(i)-Met) which serves as a primer for minus-strand DNA synthesis, and a dimer of genomic Ty RNA. Processing of the polyproteins occurs within the particle and proceeds by an ordered pathway, called maturation. First, the protease (PR) is released by autocatalytic cleavage of the Gag-Pol polyprotein yielding capsid protein p45 and a Pol-p154 precursor protein. This cleavage is a prerequisite for subsequent processing of Pol-p154 at the remaining sites to release the mature structural and catalytic proteins. Maturation takes place prior to the RT reaction and is required to produce transposition-competent VLPs.

Its subcellular location is the cytoplasm. It is found in the nucleus. The catalysed reaction is DNA(n) + a 2'-deoxyribonucleoside 5'-triphosphate = DNA(n+1) + diphosphate. The enzyme catalyses Endonucleolytic cleavage to 5'-phosphomonoester.. Functionally, capsid protein (CA) is the structural component of the virus-like particle (VLP), forming the shell that encapsulates the retrotransposons dimeric RNA genome. The particles are assembled from trimer-clustered units and there are holes in the capsid shells that allow for the diffusion of macromolecules. CA also has nucleocapsid-like chaperone activity, promoting primer tRNA(i)-Met annealing to the multipartite primer-binding site (PBS), dimerization of Ty1 RNA and initiation of reverse transcription. In terms of biological role, the aspartyl protease (PR) mediates the proteolytic cleavages of the Gag and Gag-Pol polyproteins after assembly of the VLP. Its function is as follows. Reverse transcriptase/ribonuclease H (RT) is a multifunctional enzyme that catalyzes the conversion of the retro-elements RNA genome into dsDNA within the VLP. The enzyme displays a DNA polymerase activity that can copy either DNA or RNA templates, and a ribonuclease H (RNase H) activity that cleaves the RNA strand of RNA-DNA heteroduplexes during plus-strand synthesis and hydrolyzes RNA primers. The conversion leads to a linear dsDNA copy of the retrotransposon that includes long terminal repeats (LTRs) at both ends. Integrase (IN) targets the VLP to the nucleus, where a subparticle preintegration complex (PIC) containing at least integrase and the newly synthesized dsDNA copy of the retrotransposon must transit the nuclear membrane. Once in the nucleus, integrase performs the integration of the dsDNA into the host genome. This is Transposon Ty1-OR Gag-Pol polyprotein (TY1B-OR) from Saccharomyces cerevisiae (strain ATCC 204508 / S288c) (Baker's yeast).